The primary structure comprises 72 residues: MAAALKKGSLVRAIAEQLQGSVELLASDGRIPSYVLETNGEILDIKGDYALVRFSRPTPNVWLRLDQLQSAA.

This sequence belongs to the complex I NdhO subunit family. NDH-1 can be composed of about 15 different subunits; different subcomplexes with different compositions have been identified which probably have different functions.

The protein resides in the cellular thylakoid membrane. The catalysed reaction is a plastoquinone + NADH + (n+1) H(+)(in) = a plastoquinol + NAD(+) + n H(+)(out). It catalyses the reaction a plastoquinone + NADPH + (n+1) H(+)(in) = a plastoquinol + NADP(+) + n H(+)(out). NDH-1 shuttles electrons from an unknown electron donor, via FMN and iron-sulfur (Fe-S) centers, to quinones in the respiratory and/or the photosynthetic chain. The immediate electron acceptor for the enzyme in this species is believed to be plastoquinone. Couples the redox reaction to proton translocation, and thus conserves the redox energy in a proton gradient. Cyanobacterial NDH-1 also plays a role in inorganic carbon-concentration. The polypeptide is NAD(P)H-quinone oxidoreductase subunit O (Synechococcus elongatus (strain ATCC 33912 / PCC 7942 / FACHB-805) (Anacystis nidulans R2)).